The following is a 487-amino-acid chain: 3-octaprenyl-4-hydroxybenzoate carboxy-lyase (487 aa).

Asn-172 contacts Mn(2+). Prenylated FMN is bound by residues 175-177 (IYR), 189-191 (RWL), and 194-195 (RG). Residue Glu-238 participates in Mn(2+) binding. Asp-287 acts as the Proton donor in catalysis.

The protein belongs to the UbiD family. Homohexamer. Prenylated FMN is required as a cofactor. It depends on Mn(2+) as a cofactor.

The protein localises to the cell membrane. It catalyses the reaction a 4-hydroxy-3-(all-trans-polyprenyl)benzoate + H(+) = a 2-(all-trans-polyprenyl)phenol + CO2. Its pathway is cofactor biosynthesis; ubiquinone biosynthesis. Its function is as follows. Catalyzes the decarboxylation of 3-octaprenyl-4-hydroxy benzoate to 2-octaprenylphenol, an intermediate step in ubiquinone biosynthesis. The sequence is that of 3-octaprenyl-4-hydroxybenzoate carboxy-lyase from Actinobacillus pleuropneumoniae serotype 3 (strain JL03).